Here is a 191-residue protein sequence, read N- to C-terminus: Putative acetyltransferase DDB_G0280825 (191 aa).

Belongs to the transferase hexapeptide repeat family.

The chain is Putative acetyltransferase DDB_G0280825 from Dictyostelium discoideum (Social amoeba).